We begin with the raw amino-acid sequence, 580 residues long: 2-succinyl-5-enolpyruvyl-6-hydroxy-3-cyclohexene-1-carboxylate synthase (580 aa).

The protein belongs to the TPP enzyme family. MenD subfamily. As to quaternary structure, homodimer. It depends on Mg(2+) as a cofactor. Mn(2+) is required as a cofactor. Requires thiamine diphosphate as cofactor.

The catalysed reaction is isochorismate + 2-oxoglutarate + H(+) = 5-enolpyruvoyl-6-hydroxy-2-succinyl-cyclohex-3-ene-1-carboxylate + CO2. The protein operates within quinol/quinone metabolism; 1,4-dihydroxy-2-naphthoate biosynthesis; 1,4-dihydroxy-2-naphthoate from chorismate: step 2/7. It functions in the pathway quinol/quinone metabolism; menaquinone biosynthesis. Catalyzes the thiamine diphosphate-dependent decarboxylation of 2-oxoglutarate and the subsequent addition of the resulting succinic semialdehyde-thiamine pyrophosphate anion to isochorismate to yield 2-succinyl-5-enolpyruvyl-6-hydroxy-3-cyclohexene-1-carboxylate (SEPHCHC). This Bacillus pumilus (strain SAFR-032) protein is 2-succinyl-5-enolpyruvyl-6-hydroxy-3-cyclohexene-1-carboxylate synthase.